Reading from the N-terminus, the 503-residue chain is UDP-N-acetylmuramoyl-L-alanyl-D-glutamate--2,6-diaminopimelate ligase (503 aa).

Serine 32 is a binding site for UDP-N-acetyl-alpha-D-muramoyl-L-alanyl-D-glutamate. Position 117–123 (117–123 (GTNGKTT)) interacts with ATP. UDP-N-acetyl-alpha-D-muramoyl-L-alanyl-D-glutamate-binding positions include 159–160 (TT), serine 186, glutamine 192, and arginine 194. Lysine 226 is subject to N6-carboxylysine. Residues arginine 396, 420-423 (DNPR), glycine 471, and glutamate 475 contribute to the meso-2,6-diaminopimelate site. The Meso-diaminopimelate recognition motif motif lies at 420 to 423 (DNPR).

It belongs to the MurCDEF family. MurE subfamily. Requires Mg(2+) as cofactor. Post-translationally, carboxylation is probably crucial for Mg(2+) binding and, consequently, for the gamma-phosphate positioning of ATP.

It is found in the cytoplasm. It catalyses the reaction UDP-N-acetyl-alpha-D-muramoyl-L-alanyl-D-glutamate + meso-2,6-diaminopimelate + ATP = UDP-N-acetyl-alpha-D-muramoyl-L-alanyl-gamma-D-glutamyl-meso-2,6-diaminopimelate + ADP + phosphate + H(+). It participates in cell wall biogenesis; peptidoglycan biosynthesis. Functionally, catalyzes the addition of meso-diaminopimelic acid to the nucleotide precursor UDP-N-acetylmuramoyl-L-alanyl-D-glutamate (UMAG) in the biosynthesis of bacterial cell-wall peptidoglycan. This is UDP-N-acetylmuramoyl-L-alanyl-D-glutamate--2,6-diaminopimelate ligase from Prochlorococcus marinus (strain SARG / CCMP1375 / SS120).